The following is a 239-amino-acid chain: Small ribosomal subunit protein uS2c (239 aa).

This sequence belongs to the universal ribosomal protein uS2 family.

It localises to the plastid. This Aneura mirabilis (Parasitic liverwort) protein is Small ribosomal subunit protein uS2c (rps2).